The following is a 402-amino-acid chain: uncharacterized protein (402 aa).

A run of 9 helical transmembrane segments spans residues 13 to 33, 68 to 88, 108 to 128, 149 to 169, 223 to 243, 261 to 281, 283 to 303, 327 to 347, and 353 to 373; these read IGVL…VNLA, FFIQ…GMVV, LMAL…GDIL, LLIW…LTSF, LNYF…AAAA, LWMA…VTDK, ICLL…VVYL, YLMQ…GLYG, and AGVL…HLWL.

Its subcellular location is the cell membrane. Involved in transport. This is an uncharacterized protein from Bacillus subtilis (strain 168).